We begin with the raw amino-acid sequence, 545 residues long: 2-succinyl-5-enolpyruvyl-6-hydroxy-3-cyclohexene-1-carboxylate synthase (545 aa).

It belongs to the TPP enzyme family. MenD subfamily. Homodimer. The cofactor is Mg(2+). Mn(2+) is required as a cofactor. Thiamine diphosphate serves as cofactor.

It carries out the reaction isochorismate + 2-oxoglutarate + H(+) = 5-enolpyruvoyl-6-hydroxy-2-succinyl-cyclohex-3-ene-1-carboxylate + CO2. It participates in quinol/quinone metabolism; 1,4-dihydroxy-2-naphthoate biosynthesis; 1,4-dihydroxy-2-naphthoate from chorismate: step 2/7. The protein operates within quinol/quinone metabolism; menaquinone biosynthesis. In terms of biological role, catalyzes the thiamine diphosphate-dependent decarboxylation of 2-oxoglutarate and the subsequent addition of the resulting succinic semialdehyde-thiamine pyrophosphate anion to isochorismate to yield 2-succinyl-5-enolpyruvyl-6-hydroxy-3-cyclohexene-1-carboxylate (SEPHCHC). This Nocardia farcinica (strain IFM 10152) protein is 2-succinyl-5-enolpyruvyl-6-hydroxy-3-cyclohexene-1-carboxylate synthase.